We begin with the raw amino-acid sequence, 314 residues long: Lipoyl synthase (314 aa).

A disordered region spans residues 1–24; the sequence is MMDTPIIRHPEKVRRPDNPSPRKP. Residues C53, C58, C64, C79, C83, C86, and S293 each contribute to the [4Fe-4S] cluster site. Positions 65–282 constitute a Radical SAM core domain; that stretch reads WKRRHATFMI…ADIARGKGFL (218 aa). The span at 294–308 shows a compositional bias: basic and acidic residues; the sequence is HHADRDFEDLRKARQ. The tract at residues 294 to 314 is disordered; that stretch reads HHADRDFEDLRKARQDAAATK.

The protein belongs to the radical SAM superfamily. Lipoyl synthase family. It depends on [4Fe-4S] cluster as a cofactor.

It is found in the cytoplasm. The catalysed reaction is [[Fe-S] cluster scaffold protein carrying a second [4Fe-4S](2+) cluster] + N(6)-octanoyl-L-lysyl-[protein] + 2 oxidized [2Fe-2S]-[ferredoxin] + 2 S-adenosyl-L-methionine + 4 H(+) = [[Fe-S] cluster scaffold protein] + N(6)-[(R)-dihydrolipoyl]-L-lysyl-[protein] + 4 Fe(3+) + 2 hydrogen sulfide + 2 5'-deoxyadenosine + 2 L-methionine + 2 reduced [2Fe-2S]-[ferredoxin]. It participates in protein modification; protein lipoylation via endogenous pathway; protein N(6)-(lipoyl)lysine from octanoyl-[acyl-carrier-protein]: step 2/2. Its function is as follows. Catalyzes the radical-mediated insertion of two sulfur atoms into the C-6 and C-8 positions of the octanoyl moiety bound to the lipoyl domains of lipoate-dependent enzymes, thereby converting the octanoylated domains into lipoylated derivatives. The sequence is that of Lipoyl synthase from Rhodospirillum rubrum (strain ATCC 11170 / ATH 1.1.1 / DSM 467 / LMG 4362 / NCIMB 8255 / S1).